Reading from the N-terminus, the 392-residue chain is Na(+)/H(+) antiporter NhaA 2 (392 aa).

11 helical membrane-spanning segments follow: residues 20–40, 63–83, 99–119, 127–147, 158–178, 181–201, 209–229, 265–285, 298–318, 336–356, and 365–385; these read FFAAEAAGGLILMAAALAALI, VEHWINDGLMAIFFMLVGLEI, ALPGFAALGGMVVPALIYVAF, IGGWAIPAATDIAFALGVLSL, IFLSALAILDDLGAVLIIALF, SDLSIPMLLAALGSIAVLVAL, LLPYLIVGALLWFFMLQSGIH, VAFAVVPVFGFANAGVSLSGI, VALGLLIGKQVGIFALAALAI, GVAALCGIGFTMSLFIGALAF, and EVKVGVLIGSVLSALLGVVVL.

This sequence belongs to the NhaA Na(+)/H(+) (TC 2.A.33) antiporter family.

The protein localises to the cell inner membrane. The catalysed reaction is Na(+)(in) + 2 H(+)(out) = Na(+)(out) + 2 H(+)(in). Na(+)/H(+) antiporter that extrudes sodium in exchange for external protons. This Pseudomonas savastanoi pv. phaseolicola (strain 1448A / Race 6) (Pseudomonas syringae pv. phaseolicola (strain 1448A / Race 6)) protein is Na(+)/H(+) antiporter NhaA 2.